The chain runs to 117 residues: Large ribosomal subunit protein bL20 (117 aa).

This sequence belongs to the bacterial ribosomal protein bL20 family.

Its function is as follows. Binds directly to 23S ribosomal RNA and is necessary for the in vitro assembly process of the 50S ribosomal subunit. It is not involved in the protein synthesizing functions of that subunit. The protein is Large ribosomal subunit protein bL20 of Photobacterium profundum (strain SS9).